Here is a 535-residue protein sequence, read N- to C-terminus: 4-hydroxy-3-methylbut-2-enyl diphosphate reductase, apicoplast (535 aa).

C231 is a binding site for [4Fe-4S] cluster. The (2E)-4-hydroxy-3-methylbut-2-enyl diphosphate site is built by H260 and H293. The dimethylallyl diphosphate site is built by H260 and H293. Isopentenyl diphosphate is bound by residues H260 and H293. C315 contacts [4Fe-4S] cluster. H343 lines the (2E)-4-hydroxy-3-methylbut-2-enyl diphosphate pocket. A dimethylallyl diphosphate-binding site is contributed by H343. H343 provides a ligand contact to isopentenyl diphosphate. E345 (proton donor) is an active-site residue. A (2E)-4-hydroxy-3-methylbut-2-enyl diphosphate-binding site is contributed by T383. Residue C413 coordinates [4Fe-4S] cluster. Residues S441, S442, N443, and S485 each contribute to the (2E)-4-hydroxy-3-methylbut-2-enyl diphosphate site. Residues S441, S442, N443, and S485 each coordinate dimethylallyl diphosphate. Residues S441, S442, N443, and S485 each contribute to the isopentenyl diphosphate site.

It belongs to the IspH family. Interacts with Fd/ferredoxin. The cofactor is [4Fe-4S] cluster.

The protein resides in the plastid. It localises to the apicoplast. It carries out the reaction dimethylallyl diphosphate + 2 oxidized [2Fe-2S]-[ferredoxin] + H2O = (2E)-4-hydroxy-3-methylbut-2-enyl diphosphate + 2 reduced [2Fe-2S]-[ferredoxin] + 2 H(+). The enzyme catalyses isopentenyl diphosphate + 2 oxidized [2Fe-2S]-[ferredoxin] + H2O = (2E)-4-hydroxy-3-methylbut-2-enyl diphosphate + 2 reduced [2Fe-2S]-[ferredoxin] + 2 H(+). Its pathway is isoprenoid biosynthesis; dimethylallyl diphosphate biosynthesis; dimethylallyl diphosphate from (2E)-4-hydroxy-3-methylbutenyl diphosphate: step 1/1. The protein operates within isoprenoid biosynthesis; isopentenyl diphosphate biosynthesis via DXP pathway; isopentenyl diphosphate from 1-deoxy-D-xylulose 5-phosphate: step 6/6. In terms of biological role, catalyzes the conversion of 1-hydroxy-2-methyl-2-(E)-butenyl 4-diphosphate (HMBPP) into a mixture of isopentenyl diphosphate (IPP) and dimethylallyl diphosphate (DMAPP). Acts in the terminal step of the DOXP/MEP pathway for isoprenoid precursor biosynthesis. The chain is 4-hydroxy-3-methylbut-2-enyl diphosphate reductase, apicoplast from Plasmodium falciparum (isolate 3D7).